Here is a 282-residue protein sequence, read N- to C-terminus: 2-dehydro-3-deoxyphosphooctonate aldolase (282 aa).

This sequence belongs to the KdsA family.

It is found in the cytoplasm. It catalyses the reaction D-arabinose 5-phosphate + phosphoenolpyruvate + H2O = 3-deoxy-alpha-D-manno-2-octulosonate-8-phosphate + phosphate. It participates in carbohydrate biosynthesis; 3-deoxy-D-manno-octulosonate biosynthesis; 3-deoxy-D-manno-octulosonate from D-ribulose 5-phosphate: step 2/3. It functions in the pathway bacterial outer membrane biogenesis; lipopolysaccharide biosynthesis. This chain is 2-dehydro-3-deoxyphosphooctonate aldolase, found in Shewanella pealeana (strain ATCC 700345 / ANG-SQ1).